Here is a 355-residue protein sequence, read N- to C-terminus: Guanine nucleotide-binding protein alpha-12 subunit (355 aa).

The G-alpha domain occupies Arg-28–Gln-355. Positions Asn-31–Thr-44 are G1 motif. GTP is bound by residues Gly-36–Ser-43, Leu-176–Thr-182, Asp-201–Gln-205, Asn-270–Asp-273, and Ala-327. Mg(2+) contacts are provided by Ser-43 and Thr-182. The segment at Asp-174–Thr-182 is G2 motif. The segment at Phe-197–Arg-206 is G3 motif. Residues Ile-266 to Asp-273 are G4 motif. The segment at Thr-325 to Thr-330 is G5 motif.

The protein belongs to the G-alpha family. As to quaternary structure, g proteins are composed of 3 units; alpha, beta and gamma. The alpha chain contains the guanine nucleotide binding site.

Its function is as follows. Guanine nucleotide-binding proteins (G proteins) are involved as modulators or transducers in various transmembrane signaling systems. May play a role in resistance to fungal infection in the epidermis by regulating the up-regulation of several antimicrobial peptides of the NLP and CNC families. Upstream of plc-3, tpa-1 and the p38-like pathway, required for the expression of antimicrobial peptide nlp-29 in the epidermis in response to fungal infection or physical injury. This chain is Guanine nucleotide-binding protein alpha-12 subunit (gpa-12), found in Caenorhabditis elegans.